The chain runs to 185 residues: Probable DNA-directed RNA polymerase subunit delta (185 aa).

Residues 14–81 enclose the HTH HARE-type domain; the sequence is LSMIEVAHAI…GDNTWGLRAW (68 aa). The disordered stretch occupies residues 90-185; that stretch reads ATVGENEEDE…DEEDEDEDDE (96 aa). 2 stretches are compositionally biased toward acidic residues: residues 117–167 and 175–185; these read DTDD…DDGI and HDEEDEDEDDE.

It belongs to the RpoE family. As to quaternary structure, RNAP is composed of a core of 2 alpha, a beta and a beta' subunits. The core is associated with a delta subunit and one of several sigma factors.

Its function is as follows. Participates in both the initiation and recycling phases of transcription. In the presence of the delta subunit, RNAP displays an increased specificity of transcription, a decreased affinity for nucleic acids, and an increased efficiency of RNA synthesis because of enhanced recycling. This Limosilactobacillus reuteri (strain DSM 20016) (Lactobacillus reuteri) protein is Probable DNA-directed RNA polymerase subunit delta.